A 152-amino-acid chain; its full sequence is Ribosome maturation factor RimP (152 aa).

This sequence belongs to the RimP family.

It localises to the cytoplasm. Its function is as follows. Required for maturation of 30S ribosomal subunits. The sequence is that of Ribosome maturation factor RimP from Fervidobacterium nodosum (strain ATCC 35602 / DSM 5306 / Rt17-B1).